The sequence spans 245 residues: Eukaryotic translation initiation factor 6 (245 aa).

Residues S174 and S175 each carry the phosphoserine; by CK1 modification. S231 bears the Phosphoserine mark.

The protein belongs to the eIF-6 family. In terms of assembly, monomer. Associates with the 60S ribosomal subunit. In terms of processing, phosphorylation at Ser-174 and Ser-175 promotes nuclear export.

The protein localises to the cytoplasm. It localises to the nucleus. It is found in the nucleolus. Its function is as follows. Binds to the 60S ribosomal subunit and prevents its association with the 40S ribosomal subunit to form the 80S initiation complex in the cytoplasm. Is also involved in ribosome biogenesis. Associates with pre-60S subunits in the nucleus and is involved in its nuclear export. Cytoplasmic release of TIF6 from 60S subunits and nuclear relocalization is promoted by the GTPase RIA1/EFL1 and by SDO1. Also required for pre-rRNA processing. This Saccharomyces cerevisiae (strain ATCC 204508 / S288c) (Baker's yeast) protein is Eukaryotic translation initiation factor 6.